We begin with the raw amino-acid sequence, 353 residues long: uncharacterized protein (353 aa).

Helical transmembrane passes span 16 to 36, 77 to 97, 106 to 128, 140 to 160, 167 to 187, 208 to 228, 263 to 283, 296 to 316, and 323 to 343; these read AAYI…ISCG, VVLA…FQGL, YTLG…GLHL, SVAA…LVHA, LILT…LIIA, GWSY…LLII, LLTG…LVIP, HLLP…DLLS, and IELP…ALIL.

It belongs to the binding-protein-dependent transport system permease family. FecCD subfamily. The complex is composed of two ATP-binding proteins (YvrA), two transmembrane proteins (YvrB) and a solute-binding protein (YvrC).

It localises to the cell membrane. Probably part of an ABC transporter complex. Probably responsible for the translocation of the substrate across the membrane. This is an uncharacterized protein from Bacillus subtilis (strain 168).